Here is a 335-residue protein sequence, read N- to C-terminus: Fructose-1,6-bisphosphatase class 1 (335 aa).

Glu-92, Asp-114, Leu-116, and Asp-117 together coordinate Mg(2+). Substrate-binding positions include 117–120 (DGSS), Asn-209, and Lys-275. Glu-281 provides a ligand contact to Mg(2+).

The protein belongs to the FBPase class 1 family. In terms of assembly, homotetramer. Mg(2+) serves as cofactor.

Its subcellular location is the cytoplasm. It carries out the reaction beta-D-fructose 1,6-bisphosphate + H2O = beta-D-fructose 6-phosphate + phosphate. Its pathway is carbohydrate biosynthesis; gluconeogenesis. The sequence is that of Fructose-1,6-bisphosphatase class 1 from Polaromonas sp. (strain JS666 / ATCC BAA-500).